The sequence spans 255 residues: MTLTIKEVKQLINAVNTIEELENHECFLDERKGVQNAIARRRKALEKEQALKEKYVEMTYFENEILKEHPNAIICGIDEVGRGPLAGPVVACATILNSNHNYLGLDDSKKVPVTKRLELNEALKNEVTAFAYGIATAEEIDEFNIYKATQIAMQRAIDGLSVQPTHLLIDAMTLDNALPQVSLIKGDARSVSIAAASIMAKVFRDDYMTQLSKDYPEYGFEKNAGYGTKQHLLAIDDIGIMKEHRKSFEPIKSLL.

Positions 72-255 constitute an RNase H type-2 domain; it reads AIICGIDEVG…KSFEPIKSLL (184 aa). Residues aspartate 78, glutamate 79, and aspartate 170 each contribute to the a divalent metal cation site.

This sequence belongs to the RNase HII family. It depends on Mn(2+) as a cofactor. Requires Mg(2+) as cofactor.

It localises to the cytoplasm. The enzyme catalyses Endonucleolytic cleavage to 5'-phosphomonoester.. In terms of biological role, endonuclease that specifically degrades the RNA of RNA-DNA hybrids. The polypeptide is Ribonuclease HII (Staphylococcus aureus (strain MSSA476)).